We begin with the raw amino-acid sequence, 151 residues long: 18 kDa heat shock protein (151 aa).

The region spanning 38 to 151 is the sHSP domain; it reads TFNGNAGFKV…KDNGRRIDIH (114 aa).

The protein belongs to the small heat shock protein (HSP20) family.

In terms of biological role, probable chaperone. The protein is 18 kDa heat shock protein (hsp18) of Clostridium acetobutylicum (strain ATCC 824 / DSM 792 / JCM 1419 / IAM 19013 / LMG 5710 / NBRC 13948 / NRRL B-527 / VKM B-1787 / 2291 / W).